The sequence spans 466 residues: FAD-dependent monooxygenase dpfgE (466 aa).

The first 23 residues, 1-23, serve as a signal peptide directing secretion; it reads MSQKPFRVIIVGGSVTGLTLAHS. FAD is bound by residues glutamate 35, glycine 49, and arginine 108. Asparagine 128 and asparagine 192 each carry an N-linked (GlcNAc...) asparagine glycan. The FAD site is built by aspartate 312 and alanine 325. Asparagine 376 carries N-linked (GlcNAc...) asparagine glycosylation. The helical transmembrane segment at 443–465 threads the bilayer; sequence GVVRNVFFLLAATVIVAWVCRLW.

Belongs to the paxM FAD-dependent monooxygenase family. FAD is required as a cofactor.

It is found in the membrane. The protein operates within secondary metabolite biosynthesis; terpenoid biosynthesis. In terms of biological role, FAD-dependent monooxygenase; part of the gene cluster that mediates the biosynthesis of diterpenoid pyrones. The first step of the pathway is the synthesis of the alpha-pyrone moiety by the polyketide synthase dpfgA via condensation of one acetyl-CoA starter unit with 3 malonyl-CoA units and 2 methylations. The alpha-pyrone is then combined with geranylgeranyl pyrophosphate (GGPP) formed by the GGPP synthase dpfgD through the action of the prenyltransferase dpfgC to yield a linear alpha-pyrone diterpenoid. Subsequent steps in the diterpenoid pyrone biosynthetic pathway involve the decalin core formation, which is initiated by the epoxidation of the C10-C11 olefin by the FAD-dependent oxidoreductase dpfgE, and is followed by a cyclization cascade catalyzed by the terpene cyclase dpfgB. The short chain dehydrogenase/reductase dpfgG then oxidizes the 8S hydroxy group to a ketone and the short chain dehydrogenase/reductase dpfgH reduces the ketone to the 8R hydroxy group to yield higginsianin B. Higginsianin B is further methylated by the methyltransferase dpfgI to produce the intermediate named FDDP B. The cytochrome P450 monooxygenase dfgpJ then catalyzes a three-step oxidation at C-27 to generate a carboxylic acid as well as C-26 hydroxylation. Finally, methyltransferase dpfgK methylates the carboxylic acid generated by dpfgJ, yielding the final diterpenoid pyrones from the pathway which were named FDDP D and FDDP E. The polypeptide is FAD-dependent monooxygenase dpfgE (Gibberella zeae (strain ATCC MYA-4620 / CBS 123657 / FGSC 9075 / NRRL 31084 / PH-1) (Wheat head blight fungus)).